An 896-amino-acid polypeptide reads, in one-letter code: Translation initiation factor IF-2 (896 aa).

Residues 93-219 (VKRDPQEAER…RMAEENEKNW (127 aa)) show a composition bias toward basic and acidic residues. A disordered region spans residues 93–307 (VKRDPQEAER…GSALQQGFQK (215 aa)). Residues 256–271 (GRSRSSKAARPAKKGN) are compositionally biased toward basic residues. Positions 272–285 (KHAESKADREEARA) are enriched in basic and acidic residues. Residues 395 to 564 (PRAPVVTIMG…LLQAEVLELK (170 aa)) form the tr-type G domain. The segment at 404 to 411 (GHVDHGKT) is G1. 404–411 (GHVDHGKT) lines the GTP pocket. The tract at residues 429-433 (GITQH) is G2. A G3 region spans residues 450 to 453 (DTPG). Residues 450 to 454 (DTPGH) and 504 to 507 (NKID) each bind GTP. Positions 504–507 (NKID) are G4. The G5 stretch occupies residues 540-542 (SAK).

It belongs to the TRAFAC class translation factor GTPase superfamily. Classic translation factor GTPase family. IF-2 subfamily.

It is found in the cytoplasm. In terms of biological role, one of the essential components for the initiation of protein synthesis. Protects formylmethionyl-tRNA from spontaneous hydrolysis and promotes its binding to the 30S ribosomal subunits. Also involved in the hydrolysis of GTP during the formation of the 70S ribosomal complex. The sequence is that of Translation initiation factor IF-2 from Klebsiella pneumoniae (strain 342).